A 46-amino-acid chain; its full sequence is LCVAHGITREKIEENGSMRENIIDVTKTNRVFMQHIDVLENSLGFK.

N-linked (GlcNAc...) asparagine glycosylation occurs at N15.

Belongs to the calycin superfamily. Lipocalin family. Found in many tissues including liver, urine, preputial gland, clitoral gland, submandibular gland and salivary gland.

Its subcellular location is the secreted. Functionally, binds pheromones that are released from drying urine of males. These pheromones affect the sexual behavior of females. Acts as a shuttle for pheromonal communication between individuals of the same species. This chain is Major urinary protein, found in Rattus rattus (Black rat).